Reading from the N-terminus, the 612-residue chain is Zinc metalloproteinase-disintegrin-like 8 (612 aa).

The first 20 residues, 1 to 20 (MIQVLLVTICLAVFPYQGSS), serve as a signal peptide directing secretion. The propeptide occupies 21–189 (IILGSGNVND…KKASQLNLTP (169 aa)). Positions 199-395 (KYIELVIVAD…NRPPCILNKP (197 aa)) constitute a Peptidase M12B domain. Position 202 (Glu-202) interacts with Ca(2+). Asn-218 is a glycosylation site (N-linked (GlcNAc...) asparagine). Position 286 (Asp-286) interacts with Ca(2+). 3 cysteine pairs are disulfide-bonded: Cys-310–Cys-390, Cys-350–Cys-374, and Cys-352–Cys-357. His-335 lines the Zn(2+) pocket. The active site involves Glu-336. Residues His-339 and His-345 each coordinate Zn(2+). Ca(2+) contacts are provided by Cys-390, Asn-393, Val-405, Asn-408, Phe-410, Glu-412, Glu-415, and Asp-418. A Disintegrin domain is found at 403 to 489 (PPVCGNYFVE…DCPTDDFQRN (87 aa)). 14 cysteine pairs are disulfide-bonded: Cys-406/Cys-435, Cys-417/Cys-430, Cys-419/Cys-425, Cys-429/Cys-452, Cys-443/Cys-449, Cys-448/Cys-474, Cys-461/Cys-481, Cys-468/Cys-500, Cys-493/Cys-505, Cys-512/Cys-562, Cys-527/Cys-573, Cys-540/Cys-550, Cys-557/Cys-599, and Cys-593/Cys-605. The D/ECD-tripeptide motif lies at 467–469 (ECD). The N-linked (GlcNAc...) asparagine glycan is linked to Asn-502.

It belongs to the venom metalloproteinase (M12B) family. P-III subfamily. Zn(2+) is required as a cofactor. As to expression, expressed by the venom gland.

Its subcellular location is the secreted. Snake venom metalloproteinase that impairs hemostasis in the envenomed animal. The protein is Zinc metalloproteinase-disintegrin-like 8 of Crotalus adamanteus (Eastern diamondback rattlesnake).